A 901-amino-acid polypeptide reads, in one-letter code: MALSMKPFRADDSGFQSNNLWVGSLTPETTESDLTELFGRYGDIDRITVYSSRGFAFIYYRHVEEAVAAKEALQGANLNGSQIKIEYARPAKPCKSLWVGGIGPNVSKDDLEEEFSKFGKIEDFRFLRERKTAFIDYYEMDDALQAKSMNGKPMGGSFLRVDFLRSQAPKKEQWAGSYDNRNGNMNHKPQYPHSYEDFKGDVQPSKVLWIGFPPTATQCNDEQILHNAMILFGEIERVKSYPSRNFALVEFRSAEEARQCKEGLQGRLFNNPRIKIMYSNDELPPEQDDTSFYSGMKRSRTDMFNNDPSFVSSPHSTGIPGSMRPLRGTNERSYNGAEYNDVVGKEPNWRRPSANGTGILPSPTGPGILPSPAQGTRRPMRSNPDSWEGYDPAQLVRESKRTRRDGSVDGFTPMGVDERSFGRGSVAARPIRGPPDSDHIWRGMIAKGGTPVCCARCVPMGKGIETKLPEVVNCSARTDLNMLAKHYAVAIGCEIVFFVPDREEDFASYTEFLRYLSSKDRAGVAKLDDGTTLFLVPPSDFLTDVLQVTRQERLYGVVLKLPPPAVPVTASYRQESQSNPLHYMDQARDSPANASHSLYPPRENYIRGAPEHLTAASKPSVSEPLRIPNNAAPQAGVSLTPELLATLASILPATSQPAAPESHQPMSGPSTVVSTAHQSNGLYNGEAPSQAWKRGPQTVHDASNQSFQQYGNQYTPAGQLPPPPSRYPPASNNPNYTSGMVHGNMQYQSQSVNMPQLSPLPNMPHNNYSMYTQGSSNHPVSQPMVQQYQPEASMPNQNYGPIPSYQQANFHGVTTNQAQNLNPSQFQAAMQPPADKANLEPQNQALRLQPMISGDGQGTTDGEVDKNQRYQSTLQFAANLLLQIQQKQQQQSSGTPAGQGP.

RRM domains lie at 18-90 (NNLW…YARP), 95-166 (KSLW…FLRS), and 206-281 (KVLW…YSND). The disordered stretch occupies residues 343–416 (VGKEPNWRRP…SVDGFTPMGV (74 aa)). An SPOC domain is found at 441-537 (WRGMIAKGGT…DDGTTLFLVP (97 aa)). The interval 655–736 (SQPAAPESHQ…YPPASNNPNY (82 aa)) is disordered. 2 stretches are compositionally biased toward polar residues: residues 664–682 (QPMS…SNGL) and 700–716 (HDAS…QYTP).

The protein belongs to the RRM Spen family. As to expression, expressed in roots, leaves, stems and flowers. Highest expression in flower stems and meristematic regions.

The protein localises to the nucleus. Plays a role in the regulation of flowering time in the autonomous flowering pathway by decreasing FLOWERING LOCUS C mRNA levels. Required for RNA-mediated chromatin silencing of a range of loci in the genome. Cotranscriptionally recognizes aberrant RNA and marks it for silencing. Controls alternative cleavage and polyadenylation on pre-mRNAs and antisense RNAs. Acts redundantly with FCA to prevent the expression of distally polyadenylated antisense RNAs at the FLC locus. The chain is Flowering time control protein FPA (FPA) from Arabidopsis thaliana (Mouse-ear cress).